A 431-amino-acid polypeptide reads, in one-letter code: Extensin-3 (431 aa).

Residues 1-27 form the signal peptide; sequence MGSPMASLVATLLVLTISLTFVSQSTA. 3 tandem repeats follow at residues 33 to 41, 49 to 55, and 56 to 63. Residues 33–384 are 13 X 9 AA repeats of S-P-P-P-P-V-K-H-Y; it reads SPPPPVKHYT…KSPPPPVKHY (352 aa). A disordered region spans residues 42 to 408; that stretch reads TPPVKHYSPP…KYVYKSPPPP (367 aa). The segment covering 49–59 has biased composition (pro residues); that stretch reads SPPPVYHSPPP. Positions 49–391 are 13 X 7 AA repeats of S-P-P-P-V-Y-H; the sequence is SPPPVYHSPP…KHYSPPPVYH (343 aa). The tract at residues 56 to 371 is 12 X 8 AA repeats of S-P-P-P-P-K-K-H; the sequence is SPPPPKKHYE…YHSPPPPKKH (316 aa). The isodityrosine cross-linking stretch occupies residues 64–67; the sequence is YEYK. 3 repeat units span residues 68 to 76, 77 to 83, and 84 to 91. The segment covering 68 to 87 has biased composition (pro residues); it reads SPPPPVKHYSPPPVYHSPPP. The segment at 92–95 is isodityrosine cross-linking; the sequence is YVYK. Tandem repeats lie at residues 96–104, 105–111, and 112–119. Positions 96–115 are enriched in pro residues; that stretch reads SPPPPVKHYSPPPVYHSPPP. The interval 120-123 is isodityrosine cross-linking; it reads YVYK. 3 tandem repeats follow at residues 124–132, 133–139, and 140–147. Positions 124–143 are enriched in pro residues; it reads SPPPPVKHYSPPPVYHSPPP. Residues 148 to 151 form an isodityrosine cross-linking region; sequence YVYK. Repeat copies occupy residues 152 to 160, 161 to 167, and 168 to 175. Residues 152–171 are compositionally biased toward pro residues; sequence SPPPPVKHYSPPPVYHSPPP. The isodityrosine cross-linking stretch occupies residues 176-179; that stretch reads YVYK. Tandem repeats lie at residues 180-188, 189-195, and 196-203. Residues 180 to 199 are compositionally biased toward pro residues; the sequence is SPPPPVKHYSPPPVYHSPPP. The segment at 204 to 207 is isodityrosine cross-linking; that stretch reads YVYK. 3 tandem repeats follow at residues 208–216, 217–223, and 224–231. Pro residues predominate over residues 208 to 227; sequence SPPPPVKHYSPPPVYHSPPP. The tract at residues 232-235 is isodityrosine cross-linking; it reads YVYK. Repeat copies occupy residues 236 to 244, 245 to 251, and 252 to 259. Residues 236–255 are compositionally biased toward pro residues; it reads SPPPPVKHYSPPPVYHSPPP. Positions 260–263 are isodityrosine cross-linking; sequence YVYK. 3 consecutive repeat copies span residues 264-272, 273-279, and 280-287. Residues 264–283 show a composition bias toward pro residues; it reads SPPPPVKHYSPPPVYHSPPP. Residues 288 to 291 are isodityrosine cross-linking; the sequence is YVYK. 3 consecutive repeat copies span residues 292–300, 301–307, and 308–315. Pro residues predominate over residues 292-311; the sequence is SPPPPVKHYSPPPVYHSPPP. The isodityrosine cross-linking stretch occupies residues 316-319; sequence YVYK. 3 repeat units span residues 320–328, 329–335, and 336–343. The span at 320–339 shows a compositional bias: pro residues; it reads SPPPPVKHYSPPPVYHSPPP. The tract at residues 344-347 is isodityrosine cross-linking; it reads YVYK. 3 tandem repeats follow at residues 348 to 356, 357 to 363, and 364 to 371. Positions 348 to 367 are enriched in pro residues; the sequence is SPPPPVKHYSPPPVYHSPPP. The tract at residues 372-375 is isodityrosine cross-linking; it reads YVYK. A run of 2 repeats spans residues 376–384 and 385–391. Residues 376–395 are compositionally biased toward pro residues; it reads SPPPPVKHYSPPPVYHSPPP. 2 isodityrosine cross-linking regions span residues 400–403 and 420–423; these read YVYK and YLYK.

Belongs to the extensin family. Post-translationally, the proline residues of the Ser-Pro(3) repeats are hydroxylated and then O-glycosylated (arabinosylation) by HPAT1, HPAT2 and HPAT3. Around 20% of Hyp units are in the nonglycosylated form. The Ser residues are O-galactosylated. The lack of Ser-O-galactosylation does not affect Hyp-O-arabinosylation, but both types of O-glycosylation are central for the functionality of the protein. Correct Hyp-O-arabinosylation appears to be responsible for generating a bend on the EXT3 backbone around a YVY motif, which may represent a better scenario for Tyr intramolecular cross-links (isodityrosine type). In terms of processing, synthetised as soluble proteins which become insolubilised in the cell wall through the intermolecular cross-linking of Tyr on adjacent monomers. Isodityrosine (IDT) stabilizes and makes rigid the part of the polypeptide where IDT functional sites are present. In terms of tissue distribution, predominantly expressed in the roots.

The protein resides in the secreted. The protein localises to the primary cell wall. In terms of biological role, structural component which strengthens the primary cell wall. Forms dendritic structures indicating a propensity for self-assembly through tyrosine cross-linking. Forms intermolecular cross-links exclusively by pulcherosine (three Tyr). Scaffold formation requires an unobstructed C-terminus of EXT3. Required for the correct positioning of the cell plate during cytokinesis in cells of the developing embryo. Extensins contain a characteristic repeat of the pentapeptide Ser-Pro(4). For this particular extensin, a typical repeat of Ser-Pro(3) is found. This Arabidopsis thaliana (Mouse-ear cress) protein is Extensin-3.